The sequence spans 691 residues: DNA ligase (691 aa).

NAD(+) is bound by residues 41–45 (DAEYD), 90–91 (SL), and E130. K132 (N6-AMP-lysine intermediate) is an active-site residue. 4 residues coordinate NAD(+): R153, E190, K307, and K331. Positions 425, 428, 443, and 449 each coordinate Zn(2+). The BRCT domain occupies 610 to 691 (APQGVLAGKT…LHQLLEGNTP (82 aa)).

This sequence belongs to the NAD-dependent DNA ligase family. LigA subfamily. The cofactor is Mg(2+). It depends on Mn(2+) as a cofactor.

The catalysed reaction is NAD(+) + (deoxyribonucleotide)n-3'-hydroxyl + 5'-phospho-(deoxyribonucleotide)m = (deoxyribonucleotide)n+m + AMP + beta-nicotinamide D-nucleotide.. Its function is as follows. DNA ligase that catalyzes the formation of phosphodiester linkages between 5'-phosphoryl and 3'-hydroxyl groups in double-stranded DNA using NAD as a coenzyme and as the energy source for the reaction. It is essential for DNA replication and repair of damaged DNA. The sequence is that of DNA ligase from Burkholderia lata (strain ATCC 17760 / DSM 23089 / LMG 22485 / NCIMB 9086 / R18194 / 383).